Here is a 1028-residue protein sequence, read N- to C-terminus: Unconventional myosin-Ic-A (1028 aa).

At M1 the chain carries N-acetylmethionine. A Myosin motor domain is found at 12-696 (GVQDFVLLEN…TLFATEDALE (685 aa)). ATP is bound at residue 105 to 112 (GESGSGKT). Position 348 is an N6-methyllysine (K348). Residues 573-595 (LSKLMEILMSKEPSYVRCIKPND) are actin-binding. IQ domains are found at residues 699–728 (KQGIATFLQARWKGYVQRRNFLHMKHSAIN) and 722–751 (MKHSAINIQSWWRGNIGRKKAAKKRWAVDV). The TH1 domain occupies 850 to 1024 (KDNYPQSVPR…NGHLSVVAPR (175 aa)).

This sequence belongs to the TRAFAC class myosin-kinesin ATPase superfamily. Myosin family. In terms of assembly, interacts (via its IQ motifs) with calmodulin.

The protein resides in the cytoplasm. It is found in the cell membrane. It localises to the cell projection. The protein localises to the stereocilium membrane. Functionally, myosins are actin-based motor molecules with ATPase activity. Unconventional myosins serve in intracellular movements. Their highly divergent tails are presumed to bind to membranous compartments, which would be moved relative to actin filaments. Involved in egg activation by coupling dynamic actin to membrane. The chain is Unconventional myosin-Ic-A (myo1c-a) from Xenopus laevis (African clawed frog).